The sequence spans 508 residues: Anthranilate synthase component 1 (508 aa).

Residues Ser-51 and Pro-283–Met-285 each bind L-tryptophan. Residue Gly-323–Thr-324 participates in chorismate binding. Glu-350 contributes to the Mg(2+) binding site. Chorismate-binding positions include Tyr-438, Arg-458, Gly-477–Gly-479, and Gly-479. Glu-492 provides a ligand contact to Mg(2+).

The protein belongs to the anthranilate synthase component I family. Heterotetramer consisting of two non-identical subunits: a beta subunit (TrpG) and a large alpha subunit (TrpE). Mg(2+) is required as a cofactor.

It carries out the reaction chorismate + L-glutamine = anthranilate + pyruvate + L-glutamate + H(+). Its pathway is amino-acid biosynthesis; L-tryptophan biosynthesis; L-tryptophan from chorismate: step 1/5. Feedback inhibited by tryptophan. In terms of biological role, part of a heterotetrameric complex that catalyzes the two-step biosynthesis of anthranilate, an intermediate in the biosynthesis of L-tryptophan. In the first step, the glutamine-binding beta subunit (TrpG) of anthranilate synthase (AS) provides the glutamine amidotransferase activity which generates ammonia as a substrate that, along with chorismate, is used in the second step, catalyzed by the large alpha subunit of AS (TrpE) to produce anthranilate. In the absence of TrpG, TrpE can synthesize anthranilate directly from chorismate and high concentrations of ammonia. The polypeptide is Anthranilate synthase component 1 (trpE) (Synechocystis sp. (strain ATCC 27184 / PCC 6803 / Kazusa)).